Here is a 253-residue protein sequence, read N- to C-terminus: Major prion protein (253 aa).

The first 22 residues, 1-22, serve as a signal peptide directing secretion; it reads MANLGCWMLVLFVATWSDLGLC. The segment at 23–230 is interaction with GRB2, ERI3 and SYN1; the sequence is KKRPKPGGWN…ESQAYYQRGS (208 aa). Residues 26 to 108 are disordered; it reads PKPGGWNTGG…WNKPSKPKTN (83 aa). Repeat copies occupy residues 51 to 59, 60 to 67, 68 to 75, 76 to 83, and 84 to 91. Residues 51 to 91 are 5 X 8 AA tandem repeats of P-H-G-G-G-W-G-Q; it reads PQGGGGWGQPHGGGWGQPHGGGWGQPHGGGWGQPHGGGWGQ. The span at 52 to 95 shows a compositional bias: gly residues; sequence QGGGGWGQPHGGGWGQPHGGGWGQPHGGGWGQPHGGGWGQGGGT. Histidine 61, glycine 62, glycine 63, histidine 69, glycine 70, glycine 71, histidine 77, glycine 78, glycine 79, histidine 85, glycine 86, and glycine 87 together coordinate Cu(2+). A disulfide bond links cysteine 179 and cysteine 214. N-linked (GlcNAc...) asparagine glycosylation is found at asparagine 181 and asparagine 197. The GPI-anchor amidated serine moiety is linked to residue serine 230. Positions 231 to 253 are cleaved as a propeptide — removed in mature form; the sequence is SMVLFSSPPVILLISFLIFLIVG.

Belongs to the prion family. As to quaternary structure, monomer and homodimer. Has a tendency to aggregate into amyloid fibrils containing a cross-beta spine, formed by a steric zipper of superposed beta-strands. Soluble oligomers may represent an intermediate stage on the path to fibril formation. Copper binding may promote oligomerization. Interacts with GRB2, APP, ERI3/PRNPIP and SYN1. Mislocalized cytosolically exposed PrP interacts with MGRN1; this interaction alters MGRN1 subcellular location and causes lysosomal enlargement. Interacts with KIAA1191.

It is found in the cell membrane. The protein localises to the golgi apparatus. Its primary physiological function is unclear. Has cytoprotective activity against internal or environmental stresses. May play a role in neuronal development and synaptic plasticity. May be required for neuronal myelin sheath maintenance. May play a role in iron uptake and iron homeostasis. Soluble oligomers are toxic to cultured neuroblastoma cells and induce apoptosis (in vitro). Association with GPC1 (via its heparan sulfate chains) targets PRNP to lipid rafts. Also provides Cu(2+) or Zn(2+) for the ascorbate-mediated GPC1 deaminase degradation of its heparan sulfate side chains. This Hylobates lar (Lar gibbon) protein is Major prion protein (PRNP).